Reading from the N-terminus, the 225-residue chain is UPF0758 protein Spea_3837 (225 aa).

Residues 102 to 224 (ILSDPDLTRD…IVSFAERGWI (123 aa)) form the MPN domain. Zn(2+)-binding residues include His173, His175, and Asp186. The JAMM motif signature appears at 173 to 186 (HNHPSGIAEPSTAD).

It belongs to the UPF0758 family.

This Shewanella pealeana (strain ATCC 700345 / ANG-SQ1) protein is UPF0758 protein Spea_3837.